Reading from the N-terminus, the 508-residue chain is Pyruvate kinase, cytosolic isozyme (508 aa).

Arginine 48 provides a ligand contact to substrate. K(+) is bound by residues asparagine 50, serine 52, aspartate 82, and threonine 83. 50–53 serves as a coordination point for ATP; that stretch reads NFSH. ATP contacts are provided by arginine 89 and lysine 174. Glutamate 240 is a Mg(2+) binding site. Substrate contacts are provided by glycine 263, aspartate 264, and threonine 296. Residue aspartate 264 participates in Mg(2+) binding.

This sequence belongs to the pyruvate kinase family. As to quaternary structure, homotetramer. Mg(2+) serves as cofactor. The cofactor is K(+).

Its subcellular location is the cytoplasm. It catalyses the reaction pyruvate + ATP = phosphoenolpyruvate + ADP + H(+). The protein operates within carbohydrate degradation; glycolysis; pyruvate from D-glyceraldehyde 3-phosphate: step 5/5. The polypeptide is Pyruvate kinase, cytosolic isozyme (Nicotiana tabacum (Common tobacco)).